The chain runs to 122 residues: Acidic phospholipase A2 2 (122 aa).

7 disulfides stabilise this stretch: Cys26–Cys115, Cys28–Cys44, Cys43–Cys95, Cys49–Cys122, Cys50–Cys88, Cys57–Cys81, and Cys75–Cys86. The Ca(2+) site is built by Tyr27, Gly29, and Gly31. The active site involves His47. Residue Asp48 participates in Ca(2+) binding. Asp89 is an active-site residue.

It belongs to the phospholipase A2 family. Group II subfamily. D49 sub-subfamily. Ca(2+) serves as cofactor. As to expression, expressed by the venom gland.

The protein localises to the secreted. The enzyme catalyses a 1,2-diacyl-sn-glycero-3-phosphocholine + H2O = a 1-acyl-sn-glycero-3-phosphocholine + a fatty acid + H(+). Functionally, snake venom phospholipase A2 (PLA2) that has high lipolytic activity. PLA2 catalyzes the calcium-dependent hydrolysis of the 2-acyl groups in 3-sn-phosphoglycerides. The polypeptide is Acidic phospholipase A2 2 (Craspedocephalus gramineus (Bamboo pit viper)).